The primary structure comprises 407 residues: Peptidase T (407 aa).

Residue His-82 participates in Zn(2+) binding. Asp-84 is an active-site residue. A Zn(2+)-binding site is contributed by Asp-143. The Proton acceptor role is filled by Glu-177. Zn(2+) contacts are provided by Glu-178, Asp-200, and His-382.

It belongs to the peptidase M20B family. It depends on Zn(2+) as a cofactor.

The protein resides in the cytoplasm. The enzyme catalyses Release of the N-terminal residue from a tripeptide.. Its function is as follows. Cleaves the N-terminal amino acid of tripeptides. This Streptococcus pyogenes serotype M6 (strain ATCC BAA-946 / MGAS10394) protein is Peptidase T.